The following is a 347-amino-acid chain: MRIEEGLKLGFKDVLIRPKRSTLKSRSEVELERQFTFKHSGWNWSGVPIIAANMDTVGTFRMAEVLASFDVLTAVHKHYTVEQWGEFVKRVPESVLRHVMVSTGTSSADFDKMKQILALSPALKFICIDVANGYSEHFVSFLQKAREACPDKVICAGNVVTGEMVEELILSGADIVKVGIGPGSVCTTRVKTGVGYPQLSAVIECADAAHGLGGQIVSDGGCSVPGDVAKAFGGGADFVMLGGMLAGHDECEGRVVEENGEKFMLFYGMSSESAMKRHVGGVAEYRAAEGKTVKLPLRGSVDNTVRDIMGGLRSACTYVGASHLKELTKRTTFIRVAEQENRVFGSN.

Residue 108–131 coordinates NADP(+); it reads ADFDKMKQILALSPALKFICIDVA. Residues glycine 181 and glycine 183 each coordinate K(+). The active-site Thioimidate intermediate is cysteine 186. Residue 216–239 participates in NADP(+) binding; the sequence is IVSDGGCSVPGDVAKAFGGGADFV.

Belongs to the IMPDH/GMPR family. GuaC type 1 subfamily. In terms of assembly, homotetramer.

It catalyses the reaction IMP + NH4(+) + NADP(+) = GMP + NADPH + 2 H(+). Its function is as follows. Catalyzes the irreversible NADPH-dependent deamination of GMP to IMP. It functions in the conversion of nucleobase, nucleoside and nucleotide derivatives of G to A nucleotides, and in maintaining the intracellular balance of A and G nucleotides. The polypeptide is GMP reductase (Yersinia enterocolitica serotype O:8 / biotype 1B (strain NCTC 13174 / 8081)).